The following is a 361-amino-acid chain: Mannose-1-phosphate guanyltransferase (361 aa).

Thr-153 carries the post-translational modification Phosphothreonine. A Glycyl lysine isopeptide (Lys-Gly) (interchain with G-Cter in ubiquitin) cross-link involves residue Lys-244.

The protein belongs to the transferase hexapeptide repeat family.

Its subcellular location is the cytoplasm. The catalysed reaction is alpha-D-mannose 1-phosphate + GTP + H(+) = GDP-alpha-D-mannose + diphosphate. Its pathway is nucleotide-sugar biosynthesis; GDP-alpha-D-mannose biosynthesis; GDP-alpha-D-mannose from alpha-D-mannose 1-phosphate (GTP route): step 1/1. Its function is as follows. Involved in cell wall synthesis where it is required for glycosylation. Involved in cell cycle progression through cell-size checkpoint. The chain is Mannose-1-phosphate guanyltransferase (PSA1) from Saccharomyces cerevisiae (strain ATCC 204508 / S288c) (Baker's yeast).